Here is a 353-residue protein sequence, read N- to C-terminus: Phosphate acyltransferase (353 aa).

This sequence belongs to the PlsX family. As to quaternary structure, homodimer. Probably interacts with PlsY.

The protein localises to the cytoplasm. The catalysed reaction is a fatty acyl-[ACP] + phosphate = an acyl phosphate + holo-[ACP]. It functions in the pathway lipid metabolism; phospholipid metabolism. Its function is as follows. Catalyzes the reversible formation of acyl-phosphate (acyl-PO(4)) from acyl-[acyl-carrier-protein] (acyl-ACP). This enzyme utilizes acyl-ACP as fatty acyl donor, but not acyl-CoA. This Rhodopseudomonas palustris (strain ATCC BAA-98 / CGA009) protein is Phosphate acyltransferase.